The primary structure comprises 126 residues: Holo-[acyl-carrier-protein] synthase (126 aa).

Positions 9 and 58 each coordinate Mg(2+).

The protein belongs to the P-Pant transferase superfamily. AcpS family. The cofactor is Mg(2+).

Its subcellular location is the cytoplasm. The catalysed reaction is apo-[ACP] + CoA = holo-[ACP] + adenosine 3',5'-bisphosphate + H(+). Transfers the 4'-phosphopantetheine moiety from coenzyme A to a Ser of acyl-carrier-protein. This chain is Holo-[acyl-carrier-protein] synthase, found in Escherichia coli O17:K52:H18 (strain UMN026 / ExPEC).